Consider the following 108-residue polypeptide: Peptidyl-prolyl cis-trans isomerase FKBP1A (108 aa).

Residues 20–108 enclose the PPIase FKBP-type domain; sequence GQTVVVHYVG…TFDVELLRLE (89 aa).

Belongs to the FKBP-type PPIase family. FKBP1 subfamily.

The protein localises to the cytoplasm. It carries out the reaction [protein]-peptidylproline (omega=180) = [protein]-peptidylproline (omega=0). Its activity is regulated as follows. Inhibited by both FK506 and rapamycin. Functionally, keeps in an inactive conformation TGFBR1, the TGF-beta type I serine/threonine kinase receptor, preventing TGF-beta receptor activation in absence of ligand. May modulate the RYR1 calcium channel activity. PPIases accelerate the folding of proteins. It catalyzes the cis-trans isomerization of proline imidic peptide bonds in oligopeptides. The sequence is that of Peptidyl-prolyl cis-trans isomerase FKBP1A (fkbp1a) from Xenopus laevis (African clawed frog).